Reading from the N-terminus, the 344-residue chain is Arginine N-succinyltransferase (344 aa).

Position 125 (Leu-125) interacts with succinyl-CoA. The active-site Proton donor is the His-229.

The protein belongs to the arginine N-succinyltransferase family.

It catalyses the reaction succinyl-CoA + L-arginine = N(2)-succinyl-L-arginine + CoA + H(+). Its pathway is amino-acid degradation; L-arginine degradation via AST pathway; L-glutamate and succinate from L-arginine: step 1/5. In terms of biological role, catalyzes the transfer of succinyl-CoA to arginine to produce N(2)-succinylarginine. This Salmonella dublin (strain CT_02021853) protein is Arginine N-succinyltransferase.